A 595-amino-acid polypeptide reads, in one-letter code: Phenylalanine--tRNA ligase beta subunit (595 aa).

The segment at 86-90 (KLSKP) is 3'-CCA residue in tRNA. The 79-residue stretch at 292–370 (FNDRIMDVSI…VGYGFNNLPK (79 aa)) folds into the B5 domain. Residues Asp348, Asp354, Glu357, and Asp358 each coordinate Mg(2+).

The protein belongs to the phenylalanyl-tRNA synthetase beta subunit family. Type 2 subfamily. Tetramer of two alpha and two beta subunits. Mg(2+) is required as a cofactor.

The protein resides in the cytoplasm. It catalyses the reaction tRNA(Phe) + L-phenylalanine + ATP = L-phenylalanyl-tRNA(Phe) + AMP + diphosphate + H(+). This chain is Phenylalanine--tRNA ligase beta subunit (FRS1), found in Saccharomyces cerevisiae (strain ATCC 204508 / S288c) (Baker's yeast).